We begin with the raw amino-acid sequence, 600 residues long: Proline dehydrogenase 1, mitochondrial (600 aa).

The interval 155 to 177 (AEHKEMESCTSAAERDGSGTNKR) is disordered. K368 and K486 each carry N6-acetyllysine.

This sequence belongs to the proline oxidase family. Requires FAD as cofactor. Expressed in lung, skeletal muscle and brain, to a lesser extent in heart and kidney, and weakly in liver, placenta and pancreas.

The protein localises to the mitochondrion matrix. The enzyme catalyses L-proline + a quinone = (S)-1-pyrroline-5-carboxylate + a quinol + H(+). Its pathway is amino-acid degradation; L-proline degradation into L-glutamate; L-glutamate from L-proline: step 1/2. Its function is as follows. Converts proline to delta-1-pyrroline-5-carboxylate. The protein is Proline dehydrogenase 1, mitochondrial of Homo sapiens (Human).